The following is a 293-amino-acid chain: NAD kinase (293 aa).

D73 acts as the Proton acceptor in catalysis. NAD(+)-binding positions include 73 to 74, H78, 147 to 148, R158, R175, D177, 188 to 193, and Q248; these read DG, ND, and TAYALS.

The protein belongs to the NAD kinase family. A divalent metal cation is required as a cofactor.

The protein resides in the cytoplasm. The enzyme catalyses NAD(+) + ATP = ADP + NADP(+) + H(+). Involved in the regulation of the intracellular balance of NAD and NADP, and is a key enzyme in the biosynthesis of NADP. Catalyzes specifically the phosphorylation on 2'-hydroxyl of the adenosine moiety of NAD to yield NADP. This chain is NAD kinase, found in Nitrosococcus oceani (strain ATCC 19707 / BCRC 17464 / JCM 30415 / NCIMB 11848 / C-107).